Reading from the N-terminus, the 443-residue chain is ATP-dependent protease ATPase subunit HslU (443 aa).

ATP-binding positions include isoleucine 18, 60–65 (GVGKTE), aspartate 256, glutamate 321, and arginine 393.

It belongs to the ClpX chaperone family. HslU subfamily. As to quaternary structure, a double ring-shaped homohexamer of HslV is capped on each side by a ring-shaped HslU homohexamer. The assembly of the HslU/HslV complex is dependent on binding of ATP.

It localises to the cytoplasm. In terms of biological role, ATPase subunit of a proteasome-like degradation complex; this subunit has chaperone activity. The binding of ATP and its subsequent hydrolysis by HslU are essential for unfolding of protein substrates subsequently hydrolyzed by HslV. HslU recognizes the N-terminal part of its protein substrates and unfolds these before they are guided to HslV for hydrolysis. The protein is ATP-dependent protease ATPase subunit HslU of Salmonella agona (strain SL483).